A 180-amino-acid chain; its full sequence is Small ribosomal subunit protein uS5 (180 aa).

The region spanning 24 to 87 (MIEKLVAVNR…EQARKNLATV (64 aa)) is the S5 DRBM domain.

This sequence belongs to the universal ribosomal protein uS5 family. Part of the 30S ribosomal subunit. Contacts proteins S4 and S8.

In terms of biological role, with S4 and S12 plays an important role in translational accuracy. Functionally, located at the back of the 30S subunit body where it stabilizes the conformation of the head with respect to the body. The sequence is that of Small ribosomal subunit protein uS5 from Xanthomonas axonopodis pv. citri (strain 306).